We begin with the raw amino-acid sequence, 250 residues long: tRNA (guanine-N(1)-)-methyltransferase (250 aa).

Residues Gly-116 and 136-141 (IGDYVL) contribute to the S-adenosyl-L-methionine site.

This sequence belongs to the RNA methyltransferase TrmD family. As to quaternary structure, homodimer.

It localises to the cytoplasm. The catalysed reaction is guanosine(37) in tRNA + S-adenosyl-L-methionine = N(1)-methylguanosine(37) in tRNA + S-adenosyl-L-homocysteine + H(+). Its function is as follows. Specifically methylates guanosine-37 in various tRNAs. This Pseudomonas fluorescens (strain SBW25) protein is tRNA (guanine-N(1)-)-methyltransferase.